Here is a 512-residue protein sequence, read N- to C-terminus: ATP synthase subunit alpha (512 aa).

169–176 (GDRQTGKT) serves as a coordination point for ATP.

This sequence belongs to the ATPase alpha/beta chains family. In terms of assembly, F-type ATPases have 2 components, CF(1) - the catalytic core - and CF(0) - the membrane proton channel. CF(1) has five subunits: alpha(3), beta(3), gamma(1), delta(1), epsilon(1). CF(0) has three main subunits: a(1), b(2) and c(9-12). The alpha and beta chains form an alternating ring which encloses part of the gamma chain. CF(1) is attached to CF(0) by a central stalk formed by the gamma and epsilon chains, while a peripheral stalk is formed by the delta and b chains.

It is found in the cell inner membrane. It carries out the reaction ATP + H2O + 4 H(+)(in) = ADP + phosphate + 5 H(+)(out). Produces ATP from ADP in the presence of a proton gradient across the membrane. The alpha chain is a regulatory subunit. This is ATP synthase subunit alpha from Leptothrix cholodnii (strain ATCC 51168 / LMG 8142 / SP-6) (Leptothrix discophora (strain SP-6)).